The following is a 71-amino-acid chain: IRCFITPDITSKDCPNGHVCYTKTWCDGFCSIRGERVDLDGCAATCPTVTGVDIQCCSTDNCNPFPTRKRP.

Cystine bridges form between C3–C20, C14–C42, C26–C30, C46–C56, and C57–C62.

The protein belongs to the three-finger toxin family. Long-chain subfamily. Type II alpha-neurotoxin sub-subfamily. In terms of tissue distribution, expressed by the venom gland.

It localises to the secreted. In terms of biological role, nicotinic acetylcholine receptor antagonist. Binds to muscle nicotinic acetylcholine receptor (nAChR) and inhibits acetylcholine from binding to the receptor, thereby impairing neuromuscular transmission. Produces peripheral paralysis by blocking neuromuscular transmission at the postsynaptic site. Induces concentration-dependent inhibition of indirect twitches and abolishes contractile responses of tissues to exogenous acetylcholine and carbachol, in the chick biventer cervicis nerve-muscle preparation at 100-300 nM (in vitro). Prior incubation of tissues with Indian polyvalent antivenom (1 ml/0.6 mg) prevents the neurotoxic effects at 100 nM (in vitro). Addition of Indian polyvalent antivenom (1 ml/0.6 mg) at the t90 time point partially restores the neurotoxic effects (in vitro). Displays a reversible antagonism of concentration-response curves to carbachol, with a pA2 of 8.17 (in vitro). This chain is Alpha-elapitoxin-Nn3a, found in Naja naja (Indian cobra).